The sequence spans 367 residues: DNA replication and repair protein RecF (367 aa).

30 to 37 contributes to the ATP binding site; it reads GANGSGKT.

This sequence belongs to the RecF family.

The protein resides in the cytoplasm. In terms of biological role, the RecF protein is involved in DNA metabolism; it is required for DNA replication and normal SOS inducibility. RecF binds preferentially to single-stranded, linear DNA. It also seems to bind ATP. The chain is DNA replication and repair protein RecF from Pseudomonas putida (strain ATCC 47054 / DSM 6125 / CFBP 8728 / NCIMB 11950 / KT2440).